Consider the following 267-residue polypeptide: 4-hydroxy-tetrahydrodipicolinate reductase (267 aa).

NAD(+) is bound by residues 8–13 and glutamate 34; that span reads GAAGRM. Arginine 35 is a binding site for NADP(+). NAD(+)-binding positions include 98–100 and 122–125; these read GST and APNM. The active-site Proton donor/acceptor is histidine 155. Residue histidine 156 coordinates (S)-2,3,4,5-tetrahydrodipicolinate. Residue lysine 159 is the Proton donor of the active site. Residue 165–166 participates in (S)-2,3,4,5-tetrahydrodipicolinate binding; it reads GT.

It belongs to the DapB family.

The protein resides in the cytoplasm. It catalyses the reaction (S)-2,3,4,5-tetrahydrodipicolinate + NAD(+) + H2O = (2S,4S)-4-hydroxy-2,3,4,5-tetrahydrodipicolinate + NADH + H(+). The enzyme catalyses (S)-2,3,4,5-tetrahydrodipicolinate + NADP(+) + H2O = (2S,4S)-4-hydroxy-2,3,4,5-tetrahydrodipicolinate + NADPH + H(+). It functions in the pathway amino-acid biosynthesis; L-lysine biosynthesis via DAP pathway; (S)-tetrahydrodipicolinate from L-aspartate: step 4/4. Its function is as follows. Catalyzes the conversion of 4-hydroxy-tetrahydrodipicolinate (HTPA) to tetrahydrodipicolinate. This is 4-hydroxy-tetrahydrodipicolinate reductase from Pelobacter propionicus (strain DSM 2379 / NBRC 103807 / OttBd1).